The primary structure comprises 652 residues: DNA ligase (652 aa).

NAD(+)-binding positions include 29-33, 78-79, and glutamate 107; these read DSEYD and SL. Catalysis depends on lysine 109, which acts as the N6-AMP-lysine intermediate. Arginine 130, glutamate 164, lysine 278, and lysine 302 together coordinate NAD(+). Cysteine 395, cysteine 398, cysteine 413, and cysteine 418 together coordinate Zn(2+). Residues 577 to 652 form the BRCT domain; the sequence is AADAALSGMT…IRDEDWLDSL (76 aa).

The protein belongs to the NAD-dependent DNA ligase family. LigA subfamily. It depends on Mg(2+) as a cofactor. The cofactor is Mn(2+).

The enzyme catalyses NAD(+) + (deoxyribonucleotide)n-3'-hydroxyl + 5'-phospho-(deoxyribonucleotide)m = (deoxyribonucleotide)n+m + AMP + beta-nicotinamide D-nucleotide.. Functionally, DNA ligase that catalyzes the formation of phosphodiester linkages between 5'-phosphoryl and 3'-hydroxyl groups in double-stranded DNA using NAD as a coenzyme and as the energy source for the reaction. It is essential for DNA replication and repair of damaged DNA. The sequence is that of DNA ligase from Streptococcus sanguinis (strain SK36).